The chain runs to 213 residues: Thymidylate kinase (213 aa).

Residue 11 to 18 (GGEGAGKT) coordinates ATP.

It belongs to the thymidylate kinase family.

It carries out the reaction dTMP + ATP = dTDP + ADP. Phosphorylation of dTMP to form dTDP in both de novo and salvage pathways of dTTP synthesis. This Shouchella clausii (strain KSM-K16) (Alkalihalobacillus clausii) protein is Thymidylate kinase.